The following is a 102-amino-acid chain: Small ribosomal subunit protein uS10 (102 aa).

This sequence belongs to the universal ribosomal protein uS10 family. Part of the 30S ribosomal subunit.

In terms of biological role, involved in the binding of tRNA to the ribosomes. This is Small ribosomal subunit protein uS10 from Streptomyces griseus subsp. griseus (strain JCM 4626 / CBS 651.72 / NBRC 13350 / KCC S-0626 / ISP 5235).